The following is a 343-amino-acid chain: Cytoplasmic tRNA 2-thiolation protein 1 (343 aa).

It belongs to the TtcA family. CTU1/NCS6/ATPBD3 subfamily.

It is found in the cytoplasm. It functions in the pathway tRNA modification; 5-methoxycarbonylmethyl-2-thiouridine-tRNA biosynthesis. Plays a central role in 2-thiolation of mcm(5)S(2)U at tRNA wobble positions of tRNA(Lys), tRNA(Glu) and tRNA(Gln). Directly binds tRNAs and probably acts by catalyzing adenylation of tRNAs, an intermediate required for 2-thiolation. It is unclear whether it acts as a sulfurtransferase that transfers sulfur from thiocarboxylated URM1 onto the uridine of tRNAs at wobble position. This chain is Cytoplasmic tRNA 2-thiolation protein 1, found in Drosophila grimshawi (Hawaiian fruit fly).